A 204-amino-acid chain; its full sequence is MSRYLGPRFKIIRRLKTLPGLTSKRPKYKKRVRRSSRPWWKKSRHLACLQEKQKIRFHFGLTERQLRQYVQITKKVQGSTGQVLLQLLEMRLDNILYRLGLAGTIPGARQLVNHRHILVNDHVVNIPSYQCKPQDVITIKGKKTDQLKTIITRNRNKARENKIPYHLTLDLSQNKGIVNKIIDRKDIQLNIKEMLVIEYYSRRI.

In terms of domain architecture, S4 RNA-binding spans 90-150 (MRLDNILYRL…GKKTDQLKTI (61 aa)).

The protein belongs to the universal ribosomal protein uS4 family. As to quaternary structure, part of the 30S ribosomal subunit. Contacts protein S5. The interaction surface between S4 and S5 is involved in control of translational fidelity.

The protein resides in the plastid. It is found in the chloroplast. Functionally, one of the primary rRNA binding proteins, it binds directly to 16S rRNA where it nucleates assembly of the body of the 30S subunit. Its function is as follows. With S5 and S12 plays an important role in translational accuracy. The polypeptide is Small ribosomal subunit protein uS4c (rps4) (Gnetum parvifolium (Small-leaved jointfir)).